The chain runs to 753 residues: Synaptotagmin-like protein 5 (753 aa).

Residues 7–123 (FINLSFLLDH…IISGEWFLEE (117 aa)) enclose the RabBD domain. The segment at 64–106 (CVHCQKSLGLIFDRGAPCQACSLRVCSECRVTGLDGSWKCTVC) adopts an FYVE-type zinc-finger fold. 3 disordered regions span residues 145–188 (RRSP…GFLL), 221–283 (SFKS…GFEN), and 298–359 (TKSH…LNSL). Position 147 is a phosphoserine (Ser-147). Low complexity predominate over residues 224-238 (SVSGSDRGSTTSSDL). Composition is skewed to polar residues over residues 260–275 (TQRS…TSIS) and 305–316 (TSGTPSIAVSGT). 2 C2 domains span residues 429 to 550 (VTGE…DEWF) and 590 to 717 (PQGK…VDWM).

In terms of assembly, binds RAB27A that has been activated by GTP-binding.

It localises to the membrane. May act as Rab effector protein and play a role in vesicle trafficking. Binds phospholipids. The polypeptide is Synaptotagmin-like protein 5 (Sytl5) (Rattus norvegicus (Rat)).